Reading from the N-terminus, the 92-residue chain is Small ribosomal subunit protein uS19c (92 aa).

This sequence belongs to the universal ribosomal protein uS19 family.

The protein resides in the plastid. It is found in the chloroplast. Its function is as follows. Protein S19 forms a complex with S13 that binds strongly to the 16S ribosomal RNA. This chain is Small ribosomal subunit protein uS19c, found in Cyanidium caldarium (Red alga).